A 572-amino-acid polypeptide reads, in one-letter code: Sialate:O-sulfotransferase 2 (572 aa).

Topologically, residues 1 to 18 (MARSLLKIHRYFRRKPVR) are cytoplasmic. A helical; Signal-anchor for type II membrane protein membrane pass occupies residues 19 to 39 (FFSFILLYLTAGSLVFLHSGF). The Extracellular segment spans residues 40-572 (SSDSSTAGIA…SGVPDEYRPR (533 aa)). WSC domains lie at 134–226 (RAKY…YRLE) and 237–331 (SAIF…YQTQ). N-linked (GlcNAc...) asparagine glycosylation is found at asparagine 196, asparagine 249, asparagine 262, and asparagine 561.

This sequence belongs to the WSCD family.

Its subcellular location is the golgi apparatus membrane. Its function is as follows. Sialate:O-sulfotransferase which catalyzes 8-O-sulfation at the Sia-glycan level using 3'-phosphoadenosine 5'-phosphosulfate (PAPS) as a donor, forming 8-O-sulfated Sia (Sia8S)-glycans. This is Sialate:O-sulfotransferase 2 (wscd2) from Danio rerio (Zebrafish).